The chain runs to 86 residues: MKEGIHPNYREVVFQDMSSDFSFITRSTIQTKDKIVKDGKEYPLAKIEVSSESHPFYTGTQKIMDTAGRVEKFRQKFGNKLGKAAK.

It belongs to the bacterial ribosomal protein bL31 family. Type B subfamily. In terms of assembly, part of the 50S ribosomal subunit.

The protein is Large ribosomal subunit protein bL31B of Cupriavidus necator (strain ATCC 17699 / DSM 428 / KCTC 22496 / NCIMB 10442 / H16 / Stanier 337) (Ralstonia eutropha).